Consider the following 123-residue polypeptide: uncharacterized protein (123 aa).

Residues 31–57 are compositionally biased toward basic and acidic residues; the sequence is KLRTEAKKSKDKERTKEKEKHESLAKE. Residues 31–58 are disordered; it reads KLRTEAKKSKDKERTKEKEKHESLAKEK. The helical transmembrane segment at 91–111 threads the bilayer; the sequence is IIIFLLILLVSGLMVGIFFGI.

The protein resides in the membrane. This is an uncharacterized protein from Mycoplasma genitalium (strain ATCC 33530 / DSM 19775 / NCTC 10195 / G37) (Mycoplasmoides genitalium).